The primary structure comprises 498 residues: UDP-N-acetylmuramate--L-alanine ligase (498 aa).

Residue glycine 122–serine 128 participates in ATP binding.

It belongs to the MurCDEF family.

It is found in the cytoplasm. It catalyses the reaction UDP-N-acetyl-alpha-D-muramate + L-alanine + ATP = UDP-N-acetyl-alpha-D-muramoyl-L-alanine + ADP + phosphate + H(+). The protein operates within cell wall biogenesis; peptidoglycan biosynthesis. In terms of biological role, cell wall formation. This is UDP-N-acetylmuramate--L-alanine ligase from Corynebacterium jeikeium (strain K411).